The primary structure comprises 111 residues: MDLKDGVEEEEGAGENGKGGTHAQRVSDTHLRCLPFLARKERETNFDTSMLSAGMNQLLDLEDYMFQRIQGPEEPSAETSVGGFCDDRLCQYGNMFSGYGACGTYFAPEAP.

A disordered region spans residues 1–26 (MDLKDGVEEEEGAGENGKGGTHAQRV).

This is an uncharacterized protein from Caenorhabditis elegans.